Reading from the N-terminus, the 156-residue chain is ATP synthase subunit b (156 aa).

The helical transmembrane segment at 7–27 threads the bilayer; sequence LFVQAIVFLILVLFTMKFVWP.

The protein belongs to the ATPase B chain family. F-type ATPases have 2 components, F(1) - the catalytic core - and F(0) - the membrane proton channel. F(1) has five subunits: alpha(3), beta(3), gamma(1), delta(1), epsilon(1). F(0) has three main subunits: a(1), b(2) and c(10-14). The alpha and beta chains form an alternating ring which encloses part of the gamma chain. F(1) is attached to F(0) by a central stalk formed by the gamma and epsilon chains, while a peripheral stalk is formed by the delta and b chains.

The protein resides in the cell inner membrane. In terms of biological role, f(1)F(0) ATP synthase produces ATP from ADP in the presence of a proton or sodium gradient. F-type ATPases consist of two structural domains, F(1) containing the extramembraneous catalytic core and F(0) containing the membrane proton channel, linked together by a central stalk and a peripheral stalk. During catalysis, ATP synthesis in the catalytic domain of F(1) is coupled via a rotary mechanism of the central stalk subunits to proton translocation. Functionally, component of the F(0) channel, it forms part of the peripheral stalk, linking F(1) to F(0). The chain is ATP synthase subunit b from Acidovorax sp. (strain JS42).